The sequence spans 96 residues: 2Fe-2S ferredoxin-5 (96 aa).

The region spanning 2-96 is the 2Fe-2S ferredoxin-type domain; that stretch reads PKVIVANINA…GKGDVVIYLP (95 aa). Cys36, Cys42, Cys45, and Cys81 together coordinate [2Fe-2S] cluster.

It belongs to the adrenodoxin/putidaredoxin family. It depends on [2Fe-2S] cluster as a cofactor.

Functionally, may be involved in the assembly of iron-sulfur clusters (Isc-Fd). The sequence is that of 2Fe-2S ferredoxin-5 (fdx5) from Aquifex aeolicus (strain VF5).